The following is a 71-amino-acid chain: Light-harvesting protein B-800/850 alpha chain (71 aa).

At 1–15 (MNQGKVWRVVKPTVG) the chain is on the cytoplasmic side. A helical membrane pass occupies residues 16 to 36 (VPVYLGAVAVTALILHGGLLA). Histidine 31 lines the a bacteriochlorophyll pocket. Residues 37 to 50 (KTDWFGAYWNGGKK) are Periplasmic-facing. Residues 51–71 (AAAAAAAVAPAPVAAPQAPAQ) form a helical membrane-spanning segment.

It belongs to the antenna complex alpha subunit family. An alpha/beta heterodimer conjugated to 3 bacteriochlorophyll molecules. The core complex is formed by different alpha and beta chains, binding bacteriochlorophyll molecules, and arranged most probably in tetrameric structures disposed around the reaction center. The non-pigmented gamma chains may constitute additional components.

It is found in the cell membrane. Functionally, antenna complexes are light-harvesting systems, which transfer the excitation energy to the reaction centers. The sequence is that of Light-harvesting protein B-800/850 alpha chain (pucA) from Rubrivivax gelatinosus (Rhodocyclus gelatinosus).